We begin with the raw amino-acid sequence, 136 residues long: MLDNGFSFPVRVYYEDTDAGGVVYHARYLHFFERARTEYLRTLNFTQQTLLEEQQLAFVVKTLAIDYCVAAKLDDLLMVETEVSEVKGATILFEQRLMRNTLMLSKATVKVACVDLGKMKPVAFPKEVKAAFHHLK.

Aspartate 18 is an active-site residue.

This sequence belongs to the 4-hydroxybenzoyl-CoA thioesterase family.

Functionally, displays acyl-CoA thioesterase activity with short chain aliphatic acyl-CoA thioesters, such as propionyl-CoA and butyryl-CoA. Enzyme activity is relatively low, suggesting that the acyl-CoA thioesters used in the assays are not the physiological substrates. Has no detectable activity with 4-hydroxybenzoyl-CoA, lauroyl-CoA (C12:0), arachidoyl-CoA (C20:0) and arachidonoyl-CoA (C20:4). This chain is Acyl-CoA thioesterase YbgC (ybgC), found in Haemophilus influenzae (strain ATCC 51907 / DSM 11121 / KW20 / Rd).